Here is a 262-residue protein sequence, read N- to C-terminus: Phosphatidylglycerol--prolipoprotein diacylglyceryl transferase (262 aa).

A run of 4 helical transmembrane segments spans residues 9-29 (LGPLAIRWYALCIVTGLILAV), 41-61 (IIPDDILDFILVAFPLAILGA), 80-100 (IFAIWNGGLAIYGGLITGALV), and 109-129 (LINTWDFLDIAAPSVMIAQSL). Arg-131 is an a 1,2-diacyl-sn-glycero-3-phospho-(1'-sn-glycerol) binding site. Transmembrane regions (helical) follow at residues 167 to 187 (QPTFLYESLWNLLGFALILIF), 197 to 217 (GHITAFYLIWYGFGRMVIEGM), and 227 to 247 (LRVSQWLSVVLIGLGIMIVIY).

Belongs to the Lgt family.

The protein localises to the cell membrane. It catalyses the reaction L-cysteinyl-[prolipoprotein] + a 1,2-diacyl-sn-glycero-3-phospho-(1'-sn-glycerol) = an S-1,2-diacyl-sn-glyceryl-L-cysteinyl-[prolipoprotein] + sn-glycerol 1-phosphate + H(+). The protein operates within protein modification; lipoprotein biosynthesis (diacylglyceryl transfer). Its function is as follows. Catalyzes the transfer of the diacylglyceryl group from phosphatidylglycerol to the sulfhydryl group of the N-terminal cysteine of a prolipoprotein, the first step in the formation of mature lipoproteins. The sequence is that of Phosphatidylglycerol--prolipoprotein diacylglyceryl transferase from Streptococcus pneumoniae (strain JJA).